Here is a 243-residue protein sequence, read N- to C-terminus: 1-(5-phosphoribosyl)-5-[(5-phosphoribosylamino)methylideneamino] imidazole-4-carboxamide isomerase (243 aa).

D8 serves as the catalytic Proton acceptor. D129 serves as the catalytic Proton donor.

It belongs to the HisA/HisF family.

It localises to the cytoplasm. It catalyses the reaction 1-(5-phospho-beta-D-ribosyl)-5-[(5-phospho-beta-D-ribosylamino)methylideneamino]imidazole-4-carboxamide = 5-[(5-phospho-1-deoxy-D-ribulos-1-ylimino)methylamino]-1-(5-phospho-beta-D-ribosyl)imidazole-4-carboxamide. Its pathway is amino-acid biosynthesis; L-histidine biosynthesis; L-histidine from 5-phospho-alpha-D-ribose 1-diphosphate: step 4/9. The polypeptide is 1-(5-phosphoribosyl)-5-[(5-phosphoribosylamino)methylideneamino] imidazole-4-carboxamide isomerase (Carboxydothermus hydrogenoformans (strain ATCC BAA-161 / DSM 6008 / Z-2901)).